Consider the following 504-residue polypeptide: Serine O-succinyltransferase (504 aa).

Residues 1-26 constitute a mitochondrion transit peptide; that stretch reads MLRASSKRLQLSWQVFRRFQSSNPQL. A disordered region spans residues 49–70; that stretch reads QACPNSVDPSASITSPSLSSGP. Residues 57-70 show a composition bias toward low complexity; that stretch reads PSASITSPSLSSGP. In terms of domain architecture, AB hydrolase-1 spans 117-395; sequence NAILLHTGLS…SAEEIIKLNE (279 aa). The important for substrate specificity stretch occupies residues 124-127; sequence GLSA. S221 (nucleophile) is an active-site residue. R290 contributes to the substrate binding site. Active-site residues include D443 and H480. Residue D481 coordinates substrate.

Belongs to the AB hydrolase superfamily. MetX family.

The protein localises to the mitochondrion. It catalyses the reaction succinyl-CoA + L-serine = O-succinyl-L-serine + CoA. The protein operates within amino-acid biosynthesis; L-cysteine biosynthesis; L-cysteine from L-serine: step 1/2. Functionally, transfers a succinyl group from succinyl-CoA to L-serine, forming succinyl-L-serine. Also has weak serine acetyl transferase activity and homoserine succinyl transferase activity. This is Serine O-succinyltransferase from Schizosaccharomyces pombe (strain 972 / ATCC 24843) (Fission yeast).